We begin with the raw amino-acid sequence, 938 residues long: Auxilin (938 aa).

A disordered region spans residues 19–41 (AAAGENRMKDSENKGASSPDMEP). A run of 3 repeats spans residues 61–64 (NLKD), 65–68 (NLKD), and 69–72 (TLKD). Residues 61-72 (NLKDNLKDTLKD) are 3 X 4 AA approximate tandem repeats. One can recognise a Phosphatase tensin-type domain in the interval 80–247 (SVSSYTKGDL…GYMCDLLADK (168 aa)). Ser-137 is modified (phosphoserine). Residue Cys-189 is the Phosphocysteine intermediate of the active site. Residues 253–391 (FKPLTIKAIT…FQVTLDIEVQ (139 aa)) enclose the C2 tensin-type domain. Residues 434-442 (PADLPPDHP) carry the SH3-binding motif. Residues 467–801 (EEDHAALVNQ…GKGSTNLEGK (335 aa)) form a disordered region. 2 positions are modified to phosphoserine: Ser-478 and Ser-481. Residues 531–548 (DVSTNFSSLAAPPSNSEL) are compositionally biased toward polar residues. Residues 559–569 (TGPAQAGQAGV) show a composition bias toward low complexity. Composition is skewed to polar residues over residues 579–596 (VSAQSTPRRTATSASASP) and 624–654 (FLNTSSASSDPFLQPTRSPSPTVHASSTPAV). At Ser-595 the chain carries Phosphoserine. Low complexity predominate over residues 679-694 (SAATSPTGSSHGTPTH). Over residues 754-781 (NWQQTQSKPQSSMPHSSPQNRPNYNVSF) the composition is skewed to polar residues. The J domain occupies 874–938 (TKWKPVGMAD…FENQGQKPLY (65 aa)).

Forms a complex composed of HSPA8, CLTC and DNAJC6. Interacts with HSPA8/HSC70 in an ATP-dependent manner; this interaction stimulates the HSPA8's ATPase activity. Interacts with CLTC; this interaction produces a local change in heavy-chain contacts, creating a detectable global distortion of the clathrin coat. Interacts with AP2A2. Interacts with DNM1(GTP-bound form); this interaction allows clathrin-coated vesicle (CCV) formation at the plasma membrane. The N-terminus is blocked. In terms of processing, phosphorylation at Ser-595 modulates its ability to bind CLTC and therefore the synaptic vesicle endocytosis (SVE).

The protein resides in the cytoplasmic vesicle. It localises to the clathrin-coated vesicle. Functionally, may act as a protein phosphatase and/or a lipid phosphatase. Co-chaperone that recruits HSPA8/HSC70 to clathrin-coated vesicles (CCVs) and promotes the ATP-dependent dissociation of clathrin from CCVs and participates in clathrin-mediated endocytosis of synaptic vesicles and their recycling and also in intracellular trafficking. Firstly, binds tightly to the clathrin cages, at a ratio of one DNAJC6 per clathrin triskelion. The HSPA8:ATP complex then binds to the clathrin-auxilin cage, initially at a ratio of one HSPA8 per triskelion leading to ATP hydrolysis stimulation and causing a conformational change in the HSPA8. This cycle is repeated three times to drive to a complex containing the clathrin-auxilin cage associated to three HSPA8:ADP complex. The ATP hydrolysis of the third HSPA8:ATP complex leads to a concerted dismantling of the cage into component triskelia. Then, dissociates from the released triskelia and be recycled to initiate another cycle of HSPA8's recruitment. Also acts during the early steps of clathrin-coated vesicle (CCV) formation through its interaction with the GTP bound form of DNM1. This is Auxilin from Mus musculus (Mouse).